The sequence spans 435 residues: Gamma-glutamyl phosphate reductase (435 aa).

It belongs to the gamma-glutamyl phosphate reductase family.

It localises to the cytoplasm. It carries out the reaction L-glutamate 5-semialdehyde + phosphate + NADP(+) = L-glutamyl 5-phosphate + NADPH + H(+). The protein operates within amino-acid biosynthesis; L-proline biosynthesis; L-glutamate 5-semialdehyde from L-glutamate: step 2/2. In terms of biological role, catalyzes the NADPH-dependent reduction of L-glutamate 5-phosphate into L-glutamate 5-semialdehyde and phosphate. The product spontaneously undergoes cyclization to form 1-pyrroline-5-carboxylate. This is Gamma-glutamyl phosphate reductase from Xylella fastidiosa (strain M12).